Consider the following 100-residue polypeptide: Large ribosomal subunit protein uL23 (100 aa).

This sequence belongs to the universal ribosomal protein uL23 family. Part of the 50S ribosomal subunit. Contacts protein L29, and trigger factor when it is bound to the ribosome.

One of the early assembly proteins it binds 23S rRNA. One of the proteins that surrounds the polypeptide exit tunnel on the outside of the ribosome. Forms the main docking site for trigger factor binding to the ribosome. In Thermosynechococcus vestitus (strain NIES-2133 / IAM M-273 / BP-1), this protein is Large ribosomal subunit protein uL23.